A 327-amino-acid chain; its full sequence is Transcription factor bHLH48 (327 aa).

The interval 137 to 179 (EPAETDSMVENQNQSYSSGKRKEREKKVKSSTKKNKSSVESDK) is disordered. One can recognise a bHLH domain in the interval 191–241 (QATDNHSLAERARREKINARMKLLQELVPGCDKIQGTALVLDEIINHVQTL).

Homodimer. Expressed in leaves, stems, and flowers.

Its subcellular location is the nucleus. This is Transcription factor bHLH48 (BHLH48) from Arabidopsis thaliana (Mouse-ear cress).